The sequence spans 363 residues: Uroporphyrinogen decarboxylase (363 aa).

Substrate contacts are provided by residues 27–31 (RQAGR), Asp77, Tyr157, Thr212, and His333.

Belongs to the uroporphyrinogen decarboxylase family. As to quaternary structure, homodimer.

The protein resides in the cytoplasm. It catalyses the reaction uroporphyrinogen III + 4 H(+) = coproporphyrinogen III + 4 CO2. It participates in porphyrin-containing compound metabolism; protoporphyrin-IX biosynthesis; coproporphyrinogen-III from 5-aminolevulinate: step 4/4. Functionally, catalyzes the decarboxylation of four acetate groups of uroporphyrinogen-III to yield coproporphyrinogen-III. The protein is Uroporphyrinogen decarboxylase of Cupriavidus pinatubonensis (strain JMP 134 / LMG 1197) (Cupriavidus necator (strain JMP 134)).